The chain runs to 106 residues: ER membrane protein complex subunit 5 (106 aa).

The Cytoplasmic segment spans residues 1-12 (MESSTINAKKIS). A helical membrane pass occupies residues 13-33 (VLLTLFSIIGYTAYSAHESIL). At 34–46 (EIRQDGKLPLDIK) the chain is on the lumenal side. A helical transmembrane segment spans residues 47 to 67 (CEVILVTLLFTFTTVIIASPL). Residues 68–106 (RSIQLNKWSHQRSDLAFLNSRTNFLRIKELKEKIEKVKN) lie on the Cytoplasmic side of the membrane.

Belongs to the membrane magnesium transporter (TC 1.A.67) family. In terms of assembly, component of the ER membrane protein complex (EMC).

It is found in the endoplasmic reticulum membrane. Functionally, the EMC seems to be required for efficient folding of proteins in the endoplasmic reticulum (ER). In Schizosaccharomyces pombe (strain 972 / ATCC 24843) (Fission yeast), this protein is ER membrane protein complex subunit 5 (emc5).